Here is an 850-residue protein sequence, read N- to C-terminus: DEAD-box ATP-dependent RNA helicase 26 (850 aa).

Disordered stretches follow at residues 60 to 82 and 106 to 350; these read TRPE…IRAS and GKFT…ENDE. Over residues 61 to 71 the composition is skewed to basic and acidic residues; that stretch reads RPERSQPEFAR. Threonine 109 bears the Phosphothreonine mark. A Phosphoserine modification is found at serine 110. Basic and acidic residues-rich tracts occupy residues 118–140 and 284–299; these read EVVR…EGQS and GRND…REPG. 2 stretches are compositionally biased toward acidic residues: residues 315 to 325 and 336 to 350; these read LEEEDSSDDDE and LPSE…ENDE. Residues 382–410 carry the Q motif motif; it reads TRFDQFPLSPLSLKAIKDAGFETMTVVQE. Positions 413-596 constitute a Helicase ATP-binding domain; that stretch reads LPIILQGKDV…HVALKRDHEF (184 aa). 426–433 is an ATP binding site; the sequence is AKTGTGKT. The DEAD box motif lies at 544–547; that stretch reads DEAD. Positions 630–777 constitute a Helicase C-terminal domain; sequence LLKEHIADNV…IDPEAVKRVQ (148 aa).

The protein belongs to the DEAD box helicase family.

The catalysed reaction is ATP + H2O = ADP + phosphate + H(+). This is DEAD-box ATP-dependent RNA helicase 26 (RH26) from Arabidopsis thaliana (Mouse-ear cress).